The primary structure comprises 656 residues: Macrolide export ATP-binding/permease protein MacB (656 aa).

The ABC transporter domain maps to 6–244 (LEVSACYRSF…VKAQVDMSLA (239 aa)). Position 42–49 (42–49 (GASGSGKS)) interacts with ATP. 4 helical membrane-spanning segments follow: residues 277-297 (FLTM…VALG), 531-551 (LLIS…VMNI), 586-606 (LVCL…GVVF), and 621-641 (SIVA…FLPA).

Belongs to the ABC transporter superfamily. Macrolide exporter (TC 3.A.1.122) family. In terms of assembly, homodimer. Part of the tripartite efflux system MacAB-TolC, which is composed of an inner membrane transporter, MacB, a periplasmic membrane fusion protein, MacA, and an outer membrane component, TolC. The complex forms a large protein conduit and can translocate molecules across both the inner and outer membranes. Interacts with MacA.

The protein resides in the cell inner membrane. Part of the tripartite efflux system MacAB-TolC. MacB is a non-canonical ABC transporter that contains transmembrane domains (TMD), which form a pore in the inner membrane, and an ATP-binding domain (NBD), which is responsible for energy generation. Confers resistance against macrolides. This is Macrolide export ATP-binding/permease protein MacB from Shewanella oneidensis (strain ATCC 700550 / JCM 31522 / CIP 106686 / LMG 19005 / NCIMB 14063 / MR-1).